Consider the following 382-residue polypeptide: Dual-specificity RNA methyltransferase RlmN (382 aa).

Glutamate 91 (proton acceptor) is an active-site residue. In terms of domain architecture, Radical SAM core spans 97–339; it reads ETDRGTLCIS…TTVRKTRGDD (243 aa). The cysteines at positions 104 and 344 are disulfide-linked. [4Fe-4S] cluster-binding residues include cysteine 111, cysteine 115, and cysteine 118. S-adenosyl-L-methionine-binding positions include 165 to 166, serine 197, 219 to 221, and asparagine 301; these read GE and SLH. Catalysis depends on cysteine 344, which acts as the S-methylcysteine intermediate.

It belongs to the radical SAM superfamily. RlmN family. [4Fe-4S] cluster is required as a cofactor.

It is found in the cytoplasm. The enzyme catalyses adenosine(2503) in 23S rRNA + 2 reduced [2Fe-2S]-[ferredoxin] + 2 S-adenosyl-L-methionine = 2-methyladenosine(2503) in 23S rRNA + 5'-deoxyadenosine + L-methionine + 2 oxidized [2Fe-2S]-[ferredoxin] + S-adenosyl-L-homocysteine. It catalyses the reaction adenosine(37) in tRNA + 2 reduced [2Fe-2S]-[ferredoxin] + 2 S-adenosyl-L-methionine = 2-methyladenosine(37) in tRNA + 5'-deoxyadenosine + L-methionine + 2 oxidized [2Fe-2S]-[ferredoxin] + S-adenosyl-L-homocysteine. Its function is as follows. Specifically methylates position 2 of adenine 2503 in 23S rRNA and position 2 of adenine 37 in tRNAs. m2A2503 modification seems to play a crucial role in the proofreading step occurring at the peptidyl transferase center and thus would serve to optimize ribosomal fidelity. The sequence is that of Dual-specificity RNA methyltransferase RlmN from Polaromonas sp. (strain JS666 / ATCC BAA-500).